A 308-amino-acid chain; its full sequence is Olfactory receptor 2T7 (308 aa).

Residues 1-17 (MPTLSFWVCSATPVSPG) lie on the Extracellular side of the membrane. The helical transmembrane segment at 18–40 (FFALILLVFVTSIASNVVKIILI) threads the bilayer. At 41 to 51 (HIDSRLHTPMY) the chain is on the cytoplasmic side. A helical membrane pass occupies residues 52-74 (FLLSQLSLRDILYISTIVPKMLV). Residues 75-88 (DQVMSQRAISFAGC) lie on the Extracellular side of the membrane. An intrachain disulfide couples Cys88 to Cys170. The helical transmembrane segment at 89–109 (TAQHFLYLTLAGAEFFLLGLM) threads the bilayer. At 110–130 (SCDRYVAICNPLHYPDLMSRK) the chain is on the cytoplasmic side. A helical transmembrane segment spans residues 131–151 (ICWLIVAAAWLGGSIDGFLLT). The Extracellular portion of the chain corresponds to 152–188 (PVTMQFPFCASREINHFFCEVPALLKLSCTDTSAYET). Residues 189–209 (AMYVCCIMMLLIPFSVISGSY) traverse the membrane as a helical segment. Residues 210-235 (TRILITVYRMSEAEGRRKAVATCSSH) are Cytoplasmic-facing. The chain crosses the membrane as a helical span at residues 236–256 (MVVVSLFYGAAMYTYVLPHSY). Topologically, residues 257–262 (HTPEQD) are extracellular. A helical transmembrane segment spans residues 263-283 (KAVSAFYTILTPMLNPLIYSL). Residues 284–308 (RNKDVTGALQKVVGRCVSSGKVTTF) are Cytoplasmic-facing.

Belongs to the G-protein coupled receptor 1 family.

It localises to the cell membrane. Its function is as follows. Odorant receptor. The polypeptide is Olfactory receptor 2T7 (OR2T7) (Homo sapiens (Human)).